The following is a 192-amino-acid chain: Putative manganese efflux pump MntP (192 aa).

6 consecutive transmembrane segments (helical) span residues 3 to 23, 36 to 56, 65 to 85, 112 to 132, 136 to 156, and 171 to 191; these read FSAI…VAAA, VLLV…IGWL, VQAW…GKML, FVLA…LPML, FAIS…AGLF, and LAGG…HLVL.

The protein belongs to the MntP (TC 9.B.29) family.

It is found in the cell inner membrane. Probably functions as a manganese efflux pump. The sequence is that of Putative manganese efflux pump MntP from Sorangium cellulosum (strain So ce56) (Polyangium cellulosum (strain So ce56)).